Here is a 420-residue protein sequence, read N- to C-terminus: Tyrosine--tRNA ligase (420 aa).

Tyr33 provides a ligand contact to L-tyrosine. The short motif at 38-47 (PTADSLHVGH) is the 'HIGH' region element. 2 residues coordinate L-tyrosine: Tyr167 and Gln171. The short motif at 227–231 (KFGKT) is the 'KMSKS' region element. Lys230 lines the ATP pocket. The S4 RNA-binding domain maps to 353–419 (LTVADLLVKV…GKRNYALVKV (67 aa)).

Belongs to the class-I aminoacyl-tRNA synthetase family. TyrS type 1 subfamily. In terms of assembly, homodimer.

The protein resides in the cytoplasm. The catalysed reaction is tRNA(Tyr) + L-tyrosine + ATP = L-tyrosyl-tRNA(Tyr) + AMP + diphosphate + H(+). In terms of biological role, catalyzes the attachment of tyrosine to tRNA(Tyr) in a two-step reaction: tyrosine is first activated by ATP to form Tyr-AMP and then transferred to the acceptor end of tRNA(Tyr). The protein is Tyrosine--tRNA ligase of Anaeromyxobacter dehalogenans (strain 2CP-C).